Reading from the N-terminus, the 129-residue chain is Large ribosomal subunit protein bL17 (129 aa).

The protein belongs to the bacterial ribosomal protein bL17 family. In terms of assembly, part of the 50S ribosomal subunit. Contacts protein L32.

In Desulfotalea psychrophila (strain LSv54 / DSM 12343), this protein is Large ribosomal subunit protein bL17.